A 511-amino-acid chain; its full sequence is Cobyric acid synthase (511 aa).

The GATase cobBQ-type domain occupies 251–443; the sequence is LLDIAIICLP…IHGIFDNDVF (193 aa). C332 acts as the Nucleophile in catalysis. H435 is a catalytic residue.

It belongs to the CobB/CobQ family. CobQ subfamily.

It functions in the pathway cofactor biosynthesis; adenosylcobalamin biosynthesis. Functionally, catalyzes amidations at positions B, D, E, and G on adenosylcobyrinic A,C-diamide. NH(2) groups are provided by glutamine, and one molecule of ATP is hydrogenolyzed for each amidation. The protein is Cobyric acid synthase of Listeria monocytogenes serotype 4b (strain CLIP80459).